We begin with the raw amino-acid sequence, 138 residues long: ATP synthase epsilon chain (138 aa).

This sequence belongs to the ATPase epsilon chain family. As to quaternary structure, F-type ATPases have 2 components, CF(1) - the catalytic core - and CF(0) - the membrane proton channel. CF(1) has five subunits: alpha(3), beta(3), gamma(1), delta(1), epsilon(1). CF(0) has three main subunits: a, b and c.

The protein localises to the cell inner membrane. In terms of biological role, produces ATP from ADP in the presence of a proton gradient across the membrane. The polypeptide is ATP synthase epsilon chain (Cupriavidus metallidurans (strain ATCC 43123 / DSM 2839 / NBRC 102507 / CH34) (Ralstonia metallidurans)).